Here is a 112-residue protein sequence, read N- to C-terminus: Histone H2B (112 aa).

The segment at 1 to 24 (MATPKSSSANRKKGGKKSHRKPKR) is disordered. Positions 10–24 (NRKKGGKKSHRKPKR) are enriched in basic residues.

It belongs to the histone H2B family. In terms of assembly, the nucleosome is a histone octamer containing two molecules each of H2A, H2B, H3 and H4 assembled in one H3-H4 heterotetramer and two H2A-H2B heterodimers. The octamer wraps approximately 147 bp of DNA.

It localises to the nucleus. The protein resides in the chromosome. Core component of nucleosome. Nucleosomes wrap and compact DNA into chromatin, limiting DNA accessibility to the cellular machineries which require DNA as a template. Histones thereby play a central role in transcription regulation, DNA repair, DNA replication and chromosomal stability. DNA accessibility is regulated via a complex set of post-translational modifications of histones, also called histone code, and nucleosome remodeling. The polypeptide is Histone H2B (Trypanosoma cruzi).